The primary structure comprises 122 residues: Large ribosomal subunit protein uL14 (122 aa).

It belongs to the universal ribosomal protein uL14 family. In terms of assembly, part of the 50S ribosomal subunit. Forms a cluster with proteins L3 and L19. In the 70S ribosome, L14 and L19 interact and together make contacts with the 16S rRNA in bridges B5 and B8.

In terms of biological role, binds to 23S rRNA. Forms part of two intersubunit bridges in the 70S ribosome. This is Large ribosomal subunit protein uL14 from Alcanivorax borkumensis (strain ATCC 700651 / DSM 11573 / NCIMB 13689 / SK2).